Reading from the N-terminus, the 406-residue chain is Cysteine desulfurase (406 aa).

Lys-226 is modified (N6-(pyridoxal phosphate)lysine). Residue Cys-364 is the Cysteine persulfide intermediate of the active site.

The protein belongs to the class-V pyridoxal-phosphate-dependent aminotransferase family. Csd subfamily. In terms of assembly, homodimer. Interacts with SufE and the SufBCD complex composed of SufB, SufC and SufD. The interaction with SufE is required to mediate the direct transfer of the sulfur atom from the S-sulfanylcysteine. Pyridoxal 5'-phosphate serves as cofactor.

It localises to the cytoplasm. The catalysed reaction is (sulfur carrier)-H + L-cysteine = (sulfur carrier)-SH + L-alanine. It catalyses the reaction L-selenocysteine + AH2 = hydrogenselenide + L-alanine + A + H(+). It participates in cofactor biosynthesis; iron-sulfur cluster biosynthesis. Functionally, cysteine desulfurases mobilize the sulfur from L-cysteine to yield L-alanine, an essential step in sulfur metabolism for biosynthesis of a variety of sulfur-containing biomolecules. Component of the suf operon, which is activated and required under specific conditions such as oxidative stress and iron limitation. Acts as a potent selenocysteine lyase in vitro, that mobilizes selenium from L-selenocysteine. Selenocysteine lyase activity is however unsure in vivo. The sequence is that of Cysteine desulfurase (sufS) from Shigella flexneri.